The sequence spans 1048 residues: Nonsense-mediated mRNA decay protein 5 (1048 aa).

The region spanning 24-104 is the Importin N-terminal domain; it reads AETHLKNASK…KDMLIKTMVS (81 aa). Position 977 is a phosphoserine (S977).

As to quaternary structure, GTP-bound Ran dissociates the isolated NMD5/TFIIS complex.

The protein resides in the nucleus. It localises to the cytoplasm. Its function is as follows. Active in protein import into the nucleus. Its major import substrate is transcription elongation factor TFIIS. The polypeptide is Nonsense-mediated mRNA decay protein 5 (NMD5) (Saccharomyces cerevisiae (strain ATCC 204508 / S288c) (Baker's yeast)).